The chain runs to 134 residues: Large ribosomal subunit protein uL14 (134 aa).

Belongs to the universal ribosomal protein uL14 family. In terms of assembly, in the 70S ribosome, L14 and L19 interact and together make contacts with the 16S rRNA in bridges B5 and B8. Part of the 50S ribosomal subunit. Forms a cluster with proteins L3 and L19.

Forms part of two intersubunit bridges in the 70S ribosome. Binds to 23S rRNA. This chain is Large ribosomal subunit protein uL14, found in Deinococcus radiodurans (strain ATCC 13939 / DSM 20539 / JCM 16871 / CCUG 27074 / LMG 4051 / NBRC 15346 / NCIMB 9279 / VKM B-1422 / R1).